A 460-amino-acid polypeptide reads, in one-letter code: ATP synthase subunit beta (460 aa).

Residue 150 to 157 (GGAGVGKT) participates in ATP binding.

This sequence belongs to the ATPase alpha/beta chains family. As to quaternary structure, F-type ATPases have 2 components, CF(1) - the catalytic core - and CF(0) - the membrane proton channel. CF(1) has five subunits: alpha(3), beta(3), gamma(1), delta(1), epsilon(1). CF(0) has three main subunits: a(1), b(2) and c(9-12). The alpha and beta chains form an alternating ring which encloses part of the gamma chain. CF(1) is attached to CF(0) by a central stalk formed by the gamma and epsilon chains, while a peripheral stalk is formed by the delta and b chains.

The protein localises to the cell inner membrane. The enzyme catalyses ATP + H2O + 4 H(+)(in) = ADP + phosphate + 5 H(+)(out). In terms of biological role, produces ATP from ADP in the presence of a proton gradient across the membrane. The catalytic sites are hosted primarily by the beta subunits. The chain is ATP synthase subunit beta from Proteus mirabilis (strain HI4320).